Consider the following 182-residue polypeptide: ADP-ribosylation factor 3 (182 aa).

The N-myristoyl glycine moiety is linked to residue G2. GTP-binding positions include 24 to 31 (GLDNAGKT), 67 to 71 (DLGGQ), and 126 to 129 (NKQD).

This sequence belongs to the small GTPase superfamily. Arf family. As to quaternary structure, interacts with GRIP; but preferentially when bound to GTP.

The protein localises to the golgi apparatus. Functionally, GTP-binding protein involved in protein trafficking; may modulate vesicle budding and uncoating within the Golgi apparatus. The sequence is that of ADP-ribosylation factor 3 (ARF3) from Arabidopsis thaliana (Mouse-ear cress).